The primary structure comprises 587 residues: Zinc finger protein 69 (587 aa).

The interval 42–128 is disordered; sequence NGTQQESLAD…TPGTTAAGSQ (87 aa). The region spanning 76-147 is the KRAB domain; the sequence is HDEATPGTPA…VDLSQEEWGQ (72 aa). 9 C2H2-type zinc fingers span residues 271–293, 299–321, 327–349, 355–377, 383–405, 411–433, 439–461, 467–489, and 495–517; these read HKKK…ILEQ, KPAR…CMRA, NVCE…HTGE, KECG…HTGE, EECG…HTGE, DKCQ…HSGE, SECG…HTGE, TSCC…HTGE, and KECG…HTGV. The disordered stretch occupies residues 564 to 587; that stretch reads SRHQKIHRRNTFRDDPGHENKRQL. Over residues 574–587 the composition is skewed to basic and acidic residues; that stretch reads TFRDDPGHENKRQL.

The protein belongs to the krueppel C2H2-type zinc-finger protein family.

The protein resides in the nucleus. Functionally, putative transcription factor that appears to regulate lipid metabolism. The chain is Zinc finger protein 69 from Mus musculus (Mouse).